A 462-amino-acid polypeptide reads, in one-letter code: Annexin A7 (462 aa).

Residues 1 to 130 (MSYPPNQGYP…QGYPPQQGYP (130 aa)) form a disordered region. Residues 7-131 (QGYPPQSNSP…GYPPQQGYPP (125 aa)) are 19 X 6 AA tandem repeats of Q-G-Y-P-P-Q. The span at 16-130 (PQPGQYGAPQ…QGYPPQQGYP (115 aa)) shows a compositional bias: low complexity. Annexin repeat units lie at residues 161–232 (HDCK…ALLT), 233–304 (EPAH…KLTE), 315–388 (MQVS…AIVT), and 392–462 (NPYG…DIIS).

It belongs to the annexin family.

Its function is as follows. Calcium/phospholipid-binding protein which promotes membrane fusion and is involved in exocytosis. The protein is Annexin A7 (nxnA) of Dictyostelium discoideum (Social amoeba).